A 301-amino-acid chain; its full sequence is Probable alpha-L-glutamate ligase (301 aa).

The 184-residue stretch at 104-287 folds into the ATP-grasp domain; sequence LQLLSRKGIG…VAGMIFDFIE (184 aa). ATP contacts are provided by residues K141, 178–179, D187, and 211–213; these read EF and RSN. Mg(2+) contacts are provided by D248, E260, and N262. Residues D248, E260, and N262 each coordinate Mn(2+).

It belongs to the RimK family. Mg(2+) is required as a cofactor. It depends on Mn(2+) as a cofactor.

The protein is Probable alpha-L-glutamate ligase of Vibrio parahaemolyticus serotype O3:K6 (strain RIMD 2210633).